We begin with the raw amino-acid sequence, 262 residues long: Acyl-[acyl-carrier-protein]--UDP-N-acetylglucosamine O-acyltransferase (262 aa).

The protein belongs to the transferase hexapeptide repeat family. LpxA subfamily. As to quaternary structure, homotrimer.

The protein localises to the cytoplasm. The enzyme catalyses a (3R)-hydroxyacyl-[ACP] + UDP-N-acetyl-alpha-D-glucosamine = a UDP-3-O-[(3R)-3-hydroxyacyl]-N-acetyl-alpha-D-glucosamine + holo-[ACP]. It functions in the pathway glycolipid biosynthesis; lipid IV(A) biosynthesis; lipid IV(A) from (3R)-3-hydroxytetradecanoyl-[acyl-carrier-protein] and UDP-N-acetyl-alpha-D-glucosamine: step 1/6. Its function is as follows. Involved in the biosynthesis of lipid A, a phosphorylated glycolipid that anchors the lipopolysaccharide to the outer membrane of the cell. This Vibrio vulnificus (strain CMCP6) protein is Acyl-[acyl-carrier-protein]--UDP-N-acetylglucosamine O-acyltransferase.